The primary structure comprises 354 residues: Cysteine proteinase 1 (354 aa).

A signal peptide spans 1 to 24; that stretch reads MARRNPLLFAIVVTILFVVCYGSA. The propeptide at 25–125 is activation peptide; sequence LIAQTPPPVD…HKEDVHVDDS (101 aa). Cystine bridges form between C150–C191, C184–C229, and C282–C330. The active site involves C153. An N-linked (GlcNAc...) asparagine glycan is attached at N208. Residues H289 and N309 contribute to the active site.

It belongs to the peptidase C1 family.

Its function is as follows. The cysteine proteinases have a potential role in host-parasite interaction and virulence. The sequence is that of Cysteine proteinase 1 (CYS1) from Leishmania pifanoi.